The following is a 363-amino-acid chain: UDP-3-O-acylglucosamine N-acyltransferase (363 aa).

Histidine 266 (proton acceptor) is an active-site residue.

Belongs to the transferase hexapeptide repeat family. LpxD subfamily. Homotrimer.

The catalysed reaction is a UDP-3-O-[(3R)-3-hydroxyacyl]-alpha-D-glucosamine + a (3R)-hydroxyacyl-[ACP] = a UDP-2-N,3-O-bis[(3R)-3-hydroxyacyl]-alpha-D-glucosamine + holo-[ACP] + H(+). It participates in bacterial outer membrane biogenesis; LPS lipid A biosynthesis. Catalyzes the N-acylation of UDP-3-O-acylglucosamine using 3-hydroxyacyl-ACP as the acyl donor. Is involved in the biosynthesis of lipid A, a phosphorylated glycolipid that anchors the lipopolysaccharide to the outer membrane of the cell. The polypeptide is UDP-3-O-acylglucosamine N-acyltransferase (Bordetella pertussis (strain Tohama I / ATCC BAA-589 / NCTC 13251)).